The primary structure comprises 211 residues: Large ribosomal subunit protein bL17c (211 aa).

Residues 1-95 constitute a chloroplast transit peptide; the sequence is MAIPMSMAMA…IVDGGGRIYA (95 aa).

The protein belongs to the bacterial ribosomal protein bL17 family. Part of the 50S ribosomal subunit.

Its subcellular location is the plastid. It is found in the chloroplast. This protein binds directly to 23S ribosomal RNA. The protein is Large ribosomal subunit protein bL17c (RPL17) of Arabidopsis thaliana (Mouse-ear cress).